A 239-amino-acid polypeptide reads, in one-letter code: Large ribosomal subunit protein uL2 (239 aa).

A disordered region spans residues 200–239 (VNHPHGGKEHHIGRPSTVSRRAPPGRKVGHIAARRTGRRK). Basic residues predominate over residues 222-239 (PPGRKVGHIAARRTGRRK).

Belongs to the universal ribosomal protein uL2 family. As to quaternary structure, part of the 50S ribosomal subunit. Forms a bridge to the 30S subunit in the 70S ribosome.

In terms of biological role, one of the primary rRNA binding proteins. Required for association of the 30S and 50S subunits to form the 70S ribosome, for tRNA binding and peptide bond formation. It has been suggested to have peptidyltransferase activity; this is somewhat controversial. Makes several contacts with the 16S rRNA in the 70S ribosome. This is Large ribosomal subunit protein uL2 from Thermococcus onnurineus (strain NA1).